Reading from the N-terminus, the 124-residue chain is UPF0344 protein OB1184 (124 aa).

4 helical membrane-spanning segments follow: residues 3-23, 33-53, 62-82, and 104-124; these read HMHI…LVMY, IIHM…GILT, MPIL…VAMM, and IALV…FLFI.

It belongs to the UPF0344 family.

It is found in the cell membrane. This chain is UPF0344 protein OB1184, found in Oceanobacillus iheyensis (strain DSM 14371 / CIP 107618 / JCM 11309 / KCTC 3954 / HTE831).